The sequence spans 361 residues: Single-stranded DNA-binding protein 2 (361 aa).

The residue at position 6 (Lys-6) is an N6-acetyllysine. Residues 18–50 (AREKLALYVYEYLLHVGAQKSAQTFLSEIRWEK) form the LisH domain. Disordered stretches follow at residues 147–171 (GGVP…HPNM) and 194–361 (GAMR…TMSV). A compositionally biased stretch (gly residues) spans 204 to 219 (GGPGMPGMNMGPGGGR). The span at 225–236 (TNANSIPYSSAS) shows a compositional bias: polar residues. A compositionally biased stretch (pro residues) spans 246 to 256 (GGGPPGTPIMP). Residues 289-299 (GSDGPMGGLGG) show a composition bias toward gly residues. Over residues 317–332 (ISKNSPNNMSLSNQPG) the composition is skewed to polar residues. Residue Ser-321 is modified to Phosphoserine. A Phosphothreonine modification is found at Thr-333. The span at 346-361 (NPFQSESYSPSMTMSV) shows a compositional bias: polar residues.

In terms of tissue distribution, ubiquitous.

It localises to the nucleus. This Homo sapiens (Human) protein is Single-stranded DNA-binding protein 2 (SSBP2).